A 162-amino-acid chain; its full sequence is Ribosome maturation factor RimM (162 aa).

In terms of domain architecture, PRC barrel spans 90 to 161 (EDCYYEADIV…KIIIKPLEVW (72 aa)).

This sequence belongs to the RimM family. Binds ribosomal protein uS19.

It is found in the cytoplasm. In terms of biological role, an accessory protein needed during the final step in the assembly of 30S ribosomal subunit, possibly for assembly of the head region. Essential for efficient processing of 16S rRNA. May be needed both before and after RbfA during the maturation of 16S rRNA. It has affinity for free ribosomal 30S subunits but not for 70S ribosomes. The polypeptide is Ribosome maturation factor RimM (Clostridium novyi (strain NT)).